The sequence spans 4678 residues: MMMCAATASPAAASSGLGGDGFYPAATFSSSPAPGALFMPVPDGSVAAAGLGLGLPAADSRGHYQLLLSGRALADRYRRIYTAALNDRDQGGGSAGHPASRNKKILNKKKLKRKQKSKSKVKTRSKSENLENTVIIPDIKLHSNPSAFNIYCNVRHCVLEWQKKEISLAAASKNSVQSGESDSDEEEESKEPPIKLPKIIEVGLCEVFELIKETRFSHPSLCLRSLQALLNVLQGQQPEGLQSEPPEVLESLFQLLLEITVRSTGMNDSTGQSLTALSCACLFSLVASWGETGRTLQAISAILTNNGSHACQTIQVPTILNSLQRSVQAVLVGKIQIQDWFSNGIKKAALMHKWPLKEISVDEDDQCLLQNDGFFLYLLCKDGLYKIGSGYSGTVRGHIYNSTSRIRNRKEKKSWLGYAQGYLLYRDVNNHSMTAIRISPETLEQDGTVMLPDCHTEGQNILFTDGEYINQIAASRDDGFVVRIFATSTEPVLQQELQLKLARKCLHACGISLFDLEKDLHIISTGFDEESAILGAGREFALMKTANGKIYYTGKYQSLGIKQGGPSAGKWVELPITKSPKIVHFSVGHDGSHALLVAEDGSIFFTGSASKGEDGESTKSRRQSKPYKPKKIIKMEGKIVVYTACNNGSSSVISKDGELYMFGKDAIYSDSSSLVTDLKGHFVTQVAMGKAHTCVLMKNGEVWTFGVNNKGQCGRDTGAMNQGGKGFGVENMATAMDEDLEEELDEKDEKSMMCPPGMHKWKLEQCMVCTVCGDCTGYGASCVSSGRPDRVPGGICGCGSGESGCAVCGCCKACARELDGQEARQRGILDAVKEMIPLDLLLAVPVPGVNIEEHLQLRQEEKRQRVIRRHRLEEGRGPLVFAGPIFMNHREQALARLRSHPAQLKHKRDKHKDGSGERGEKDASKITTYPPGSVRFDCELRAVQVSCGFHHSVVLMENGDVYTFGYGQHGQLGHGDVNSRGCPTLVQALPGPSTQVTAGSNHTAVLLMDGQVFTFGSFSKGQLGRPILDVPYWNAKPAPMPNIGSKYGRKATWIGASGDQTFLRIDEALINSHVLATSEIFASKHIIGLVPASISEPPPFKCLLINKVDGSCKTFNDSEQEDLQGFGVCLDPVYDVIWRFRPNTRELWCYNAVVADARLPSAADMQSRCSILSPELALPTGSRALTTRSHAALHILGCLDTLAAMQDLKMGVASTEEETQAVMKVYSKEDYSVVNRFESHGGGWGYSAHSVEAIRFSADTDILLGGLGLFGGRGEYTAKIKLFELGPDGGDHETDGDLLAETDVLAYDCAAREKYAMMFDEPVLLQAGWWYVAWARVSGPSSDCGSHGQASITTDDGVVFQFKSSKKSNNGTDVNAGQIPQLLYRLPTSDGSASKGKQQTSEPVHILKRSFARTVSVECFESLLSILHWSWTTLVLGVEELRGLKGFQFTATLLDLERLRFVGTCCLRLLRVYTCEIYPVSATGKAVVEETSKLAECIGKTRTLLRKILSEGVDHCMVKLDNDPQGYLSQPLSLLEAVLQECHNTFTACFHSFYPTPALQWACLCDLLNCLDQDIQEANFKTSSSRLLAAVMSALCHTSVKLTSIFPIAYDGEVLLRSIVKQVSTENDSTLVHRFPLLVAHMEKLSQSEENISGMTSFREVLEKMLVIVVLPVRNSLRRENELFSSHLVSNTCGLLASIVSELTASALGSEVDGLNSLHSVKASANRFTKTSQGRSWNTGNGSPDAICFSVDKPGIVVVGFSVYGGGGIHEYELEVLVDDSEHAGDSTHSHRWTSLELVKGTYTTDDSPSDIAEIRLDKVVPLKENVKYAVRLRNYGSRTANGDGGMTTVQCPDGVTFTFSTCSLSSNGTNQTRGQIPQILYYRSEFDGDLQSQLLSKANEEDKNCSRALSVVSTVVRASKDLLHRALAVDADDIPELLSSSSLFSMLLPLIIAYIGPVAAAIPKVAVEVFGLVQQLLPSVAILNQKYAPPAFNPNQSTDSTTGNQPEQGLSACTTSSHYAVIESEHPYKPACVMHYKVTFPECVRWMTIEFDPQCGTAQSEDVLRLLIPVRTVQNSGYGPKLTSVHENLNSWIELKKFSGSSGWPTMVLVLPGNEALFSLETASDYVKDDKASFYGFKCFAIGYEFSPGPDEGVIQLEKELANLGGVCAAALMKKDLALPIGNELEEDLEILEEAALQVCKTHSGILGKGLALSHSPTILEALEGNLPLQIQSNEQSFLDDFIACVPGSSGGRLARWLQPDSYADPQKTSLILNKDDIRCGWPTTITVQTKDQYGDVVHVPNMKVEVKAVPVSQKKMSLQQDQAKKPQRIPGSPAVTAASSNTDMTYGGLASPKLDVSYEPMIVKEARYIAITMMKVYENYSFEELRFASPTPKRPSENMLIRVNNDGTYCANWTPGAIGLYTLHVTIDGIEIDAGLEVKVKDPPKGMIPPGTQLVKPKSEPQPNKVRKFVAKDSAGLRIRSHPSLQSEQIGIVKVNGTITFIDEIHNDDGVWLRLNDETIKKYVPNMNGYTEAWCLSFNQHLGKSLLVPVDESKTNTDDFFKDINSCCPQEATMQEQDMPFLRGGPGMYKVVKTGPSGHNIRSCPNLRGIPIGMLVLGNKVKAVGEVTNSEGTWVQLDQNSMVEFCESDEGEAWSLARDRGGNQYLRHEDEQALLDQNSQTPPPSPFSVQAFNKGASCSAQGFDYGLGNSKGDRGNISTSSKPASTSGKSELSSKHSRSLKPDGRMSRTTADQKKPRGTESLSASESLILKSDAAKLRSDSHSRSLSPNHNTLQTLKSDGRMPSSSRAESPGPGSRLSSPKPKTLPANRSSPSGASSPRSSSPHDKNLPQKSTAPVKTKLDPPRERSKSDSYTLDPDTLRKKKMPLTEPLRGRSTSPKPKSVPKDSTDSPGSENRAPSPHVVQENLHSEVVEVCTSSTLKTNSLTDSTCDDSSEFKSVDEGSNKVHFSIGKAPLKDEQEMRASPKISRKCANRHTRPKKEKSSFLFKGDGSKPLEPAKQAMSPSVAECARAVFASFLWHEGIVHDAMACSSFLKFHPELSKEHAPIRSSLNSQQPTEEKETKLKNRHSLEISSALNMFNIAPHGPDISKMGSINKNKVLSMLKEPPLHEKCEDGKTETTFEMSMHNTMKSKSPLPLTLQHLVAFWEDISLATIKAASQNMIFPSPGSCAVLKKKECEKENKKSKKEKKKKEKAEVRPRGNLFGEMAQLAVGGPEKDTICELCGESHPYPVTYHMRQAHPGCGRYAGGQGYNSIGHFCGGWAGNCGDGGIGGSTWYLVCDRCREKYLREKQAAAREKVKQSRRKPMQVKTPRALPTMEAHQVIKANALFLLSLSSAAEPSILCYHPAKPFQSQLPSVKEGISEDLPVKMPCLYLQTLARHHHENFVGYQDDNLFQDEMRYLRSTSVPAPYISVTPDASPNVFEEPESNMKSMPPSLETSPITDTDLAKRTVFQRSYSVVASEYDKQHSILPARVKAIPRRRVNSGDTEVGSSLLRHPSPELSRLISAHSSLSKGERNFQWPVLAFVIQHHDLEGLEIAMKQALRKSACRVFAMEAFNWLLCNVIQTTSLHDILWHFVASLTPAPVEPEEEEDEENKTSKENSEQEKDTRVCEHPLSDIVIAGEAAHPLPHTFHRLLQTISDLMMSLPSGSSLQQMALRCWSLKFKQSDHQFLHQSNVFHHINNILSKSDDGDSEESFSISIQSGFEAMSQELCIVMCLKDLTSIVDIKTSSRPAMIGSLTDGSTETFWESGDEDKNKTKNITINCVKGINARYVSVHVDNSRDLGNKVTSMTFLTGKAVEDLCRIKQVDLDSRHIGWVTSELPGGDNHIIKIELKGPENTLRVRQVKVLGWKDGESTKIAGQISASVAQQRNCEAETLRVFRLITSQVFGKLISGDAEPTPEQEEKALLSSPEGEEKVYNATSDADLKEHMVGIIFSRSKLTNLQKQVCAHIVQAIRMEATRVREEWEHAISSKENANSQPNDEDASSDAYCFELLSMVLALSGSNVGRQYLAQQLTLLQDLFSLLHTASPRVQRQVTSLLRRVLPEVTPSRLASIIGVKSLPPADISDIIHSTEKGDWNKLGILDMFLGCIAKALTVQLKAKGTTITGTAGTTVGKGVTTVTLPMIFNSSYLRRGESHWWMKGSTPTQISEIIIKLIKDMAAGHLSEAWSRVTKNAIAETIIALTKMEEEFRSPVRCIATTRLWLALASLCVLDQDHVDRLSSGRWMGKDGQQKQMPMCDNHDDGETAAIILCNVCGNLCTDCDRFLHLHRRTKTHQRQVFKEEEEAIKVDLHEGCGRTKLFWLMALADSKTMKAMVEFREHTGKPTTSSSEACRFCGSRSGTELSAVGSVCSDADCQEYAKIACSKTHPCGHPCGGVKNEEHCLPCLHGCDKSATSLKQDADDMCMICFTEALSAAPAIQLDCSHIFHLQCCRRVLENRWLGPRITFGFISCPICKNKINHIVLKDLLDPIKELYEDVRRKALMRLEYEGLHKSEAITTPGVRFYNDPAGYAMNRYAYYVCYKCRKAYFGGEARCDAEAGRGDDYDPRELICGACSDVSRAQMCPKHGTDFLEYKCRYCCSVAVFFCFGTTHFCNACHDDFQRMTSIPKEELPHCPAGPKGKQLEGTECPLHVVHPPTGEEFALGCGVCRNAHTF.

Disordered stretches follow at residues 87–127 (DRDQ…RSKS), 172–192 (SKNS…SKEP), and 609–628 (ASKG…KPYK). Over residues 100-124 (SRNKKILNKKKLKRKQKSKSKVKTR) the composition is skewed to basic residues. Residues serine 127, serine 178, serine 181, and serine 183 each carry the phosphoserine modification. RCC1 repeat units follow at residues 600-655 (DGSI…VISK), 699-755 (NGEV…MMCP), 907-957 (KRDK…VLME), 958-1008 (NGDV…VLLM), and 1010-1066 (GQVF…LRID). The span at 898 to 910 (RSHPAQLKHKRDK) shows a compositional bias: basic residues. A disordered region spans residues 898 to 928 (RSHPAQLKHKRDKHKDGSGERGEKDASKITT). Basic and acidic residues predominate over residues 911 to 924 (HKDGSGERGEKDAS). The PHR domain 1 stretch occupies residues 1235–1386 (NRFESHGGGW…GQIPQLLYRL (152 aa)). Position 1624 is a phosphoserine (serine 1624). A PHR domain 2 region spans residues 1726-1884 (NRFTKTSQGR…GQIPQILYYR (159 aa)). A disulfide bridge links cysteine 1748 with cysteine 1863. Disordered regions lie at residues 1993 to 2012 (FNPN…QGLS) and 2321 to 2340 (QQDQ…VTAA). Over residues 1994 to 2012 (NPNQSTDSTTGNQPEQGLS) the composition is skewed to polar residues. Residues 2022 to 2550 (VIESEHPYKP…NQHLGKSLLV (529 aa)) form an RAE1 binding region. One copy of the Filamin repeat lies at 2341–2443 (SSNTDMTYGG…IDAGLEVKVK (103 aa)). Phosphothreonine is present on threonine 2683. 4 disordered regions span residues 2709-2931 (LGNS…LHSE), 2943-2963 (TNSL…VDEG), 2979-3020 (EQEM…EPAK), and 3066-3085 (APIR…ETKL). Positions 2718–2733 (NISTSSKPASTSGKSE) are enriched in polar residues. Residues 2742–2760 (LKPDGRMSRTTADQKKPRG) show a composition bias toward basic and acidic residues. A Phosphoserine modification is found at serine 2769. Positions 2775–2785 (DAAKLRSDSHS) are enriched in basic and acidic residues. Polar residues predominate over residues 2786-2810 (RSLSPNHNTLQTLKSDGRMPSSSRA). Phosphoserine is present on residues serine 2787, serine 2789, serine 2833, serine 2839, serine 2869, serine 2871, and serine 2920. Over residues 2828–2843 (PANRSSPSGASSPRSS) the composition is skewed to low complexity. The segment covering 2860 to 2871 (TKLDPPRERSKS) has biased composition (basic and acidic residues). Residue serine 2985 is modified to Phosphoserine. The segment covering 2988 to 3001 (ISRKCANRHTRPKK) has biased composition (basic residues). A phosphoserine mark is found at serine 3090, serine 3478, and serine 3505. Residues 3605–3631 (PVEPEEEEDEENKTSKENSEQEKDTRV) are disordered. Over residues 3616 to 3631 (NKTSKENSEQEKDTRV) the composition is skewed to basic and acidic residues. Positions 3719 to 3897 (SISIQSGFEA…VAQQRNCEAE (179 aa)) constitute a DOC domain. The disordered stretch occupies residues 3915-3934 (SGDAEPTPEQEEKALLSSPE). Threonine 3921 bears the Phosphothreonine mark. 2 positions are modified to phosphoserine: serine 3931 and serine 3932. Zn(2+)-binding residues include cysteine 4428, cysteine 4431, cysteine 4446, histidine 4448, histidine 4451, cysteine 4454, cysteine 4475, cysteine 4478, cysteine 4544, and cysteine 4547. Residues 4428–4479 (CMICFTEALSAAPAIQLDCSHIFHLQCCRRVLENRWLGPRITFGFISCPICK) form an RING-type; atypical zinc finger. The tract at residues 4539 to 4676 (YAYYVCYKCR…LGCGVCRNAH (138 aa)) is tandem cysteine domain. Cysteine 4558 is an active-site residue. Zn(2+) is bound by residues cysteine 4575, cysteine 4578, cysteine 4587, histidine 4590, cysteine 4599, cysteine 4602, and cysteine 4603. Residue cysteine 4610 is part of the active site. Residues cysteine 4617, cysteine 4620, cysteine 4638, cysteine 4652, histidine 4658, cysteine 4669, and cysteine 4672 each coordinate Zn(2+).

The protein belongs to the RING-Cys relay (RCR) family. In terms of assembly, interacts with MYC. Interacts with TSC2 (tuberin) when TSC2 is in complex with TSC1 (hamartin). Interacts with FBXO45. Interacts with RAE1. Interacts with CPNE1 (via VWFA domain) and CPNE4 (via VWFA domain). Interacts with (sumoylated) RANGAP1; interaction with sumoylated RANGAP1 inhibits E3 ubiquitin-protein ligase activity and promotes MYCBP2 translocation to the nucleus. Interacts with RAN. Interacts with ATP13A2; the interaction inhibits the ubiquitination of TSC2 by MYCBP2. Interacts with USP11. Autoubiquitinated. In terms of tissue distribution, expressed in all tissues examined, expression is exceptionally abundant in brain and thymus. Colocalizes with TSC1 and TSC2 along the neurites and in the growth cones. Highly expressed in peripheral and central neurons. Colocalized with TSC1 in one of the filopodial extensions at the tip of a growth cone.

The protein localises to the nucleus. It is found in the cell projection. Its subcellular location is the axon. The protein resides in the cytoplasm. It localises to the cytoskeleton. It catalyses the reaction [E2 ubiquitin-conjugating enzyme]-S-ubiquitinyl-L-cysteine + [acceptor protein]-L-threonine = [E2 ubiquitin-conjugating enzyme]-L-cysteine + [acceptor protein]-3-O-ubiquitinyl-L-threonine.. It functions in the pathway protein modification; protein ubiquitination. Atypical E3 ubiquitin-protein ligase which specifically mediates ubiquitination of threonine and serine residues on target proteins, instead of ubiquitinating lysine residues. Shows esterification activity towards both threonine and serine, with a preference for threonine, and acts via two essential catalytic cysteine residues that relay ubiquitin to its substrate via thioester intermediates. Interacts with the E2 enzymes UBE2D1, UBE2D3, UBE2E1 and UBE2L3. Plays a key role in neural development, probably by mediating ubiquitination of threonine residues on target proteins. Involved in different processes such as regulation of neurite outgrowth, synaptic growth, synaptogenesis and axon degeneration. Required for the formation of major central nervous system axon tracts. Required for proper axon growth by regulating axon navigation and axon branching: acts by regulating the subcellular location and stability of MAP3K12/DLK. Required for proper localization of retinogeniculate projections but not for eye-specific segregation. Regulates axon guidance in the olfactory system. Involved in Wallerian axon degeneration, an evolutionarily conserved process that drives the loss of damaged axons: acts by promoting destabilization of NMNAT2, probably via ubiquitination of NMNAT2. Catalyzes ubiquitination of threonine and/or serine residues on NMNAT2, consequences of threonine and/or serine ubiquitination are however unknown. Regulates the internalization of TRPV1 in peripheral sensory neurons. Mediates ubiquitination and subsequent proteasomal degradation of TSC2/tuberin. Independently of the E3 ubiquitin-protein ligase activity, also acts as a guanosine exchange factor (GEF) for RAN in neurons of dorsal root ganglia. May function as a facilitator or regulator of transcriptional activation by MYC. Acts in concert with HUWE1 to regulate the circadian clock gene expression by promoting the lithium-induced ubiquination and degradation of NR1D1. In Homo sapiens (Human), this protein is E3 ubiquitin-protein ligase MYCBP2.